A 341-amino-acid polypeptide reads, in one-letter code: UDP-N-acetylenolpyruvoylglucosamine reductase (341 aa).

An FAD-binding PCMH-type domain is found at 15–185 (LAQSCADLVE…TAVGLRLVKR (171 aa)). R161 is an active-site residue. Residue S231 is the Proton donor of the active site. Residue E327 is part of the active site.

This sequence belongs to the MurB family. Requires FAD as cofactor.

Its subcellular location is the cytoplasm. The catalysed reaction is UDP-N-acetyl-alpha-D-muramate + NADP(+) = UDP-N-acetyl-3-O-(1-carboxyvinyl)-alpha-D-glucosamine + NADPH + H(+). It participates in cell wall biogenesis; peptidoglycan biosynthesis. Its function is as follows. Cell wall formation. The protein is UDP-N-acetylenolpyruvoylglucosamine reductase of Shewanella baltica (strain OS195).